The chain runs to 801 residues: Leucine--tRNA ligase (801 aa).

The 'HIGH' region motif lies at 39–50; that stretch reads PYPSGAGIHVGH. Positions 578 to 582 match the 'KMSKS' region motif; the sequence is KMSKS. Lys-581 is an ATP binding site.

This sequence belongs to the class-I aminoacyl-tRNA synthetase family.

It localises to the cytoplasm. The enzyme catalyses tRNA(Leu) + L-leucine + ATP = L-leucyl-tRNA(Leu) + AMP + diphosphate. This Mesoplasma florum (strain ATCC 33453 / NBRC 100688 / NCTC 11704 / L1) (Acholeplasma florum) protein is Leucine--tRNA ligase.